We begin with the raw amino-acid sequence, 198 residues long: Recombination protein RecR (198 aa).

Residues 58-73 form a C4-type zinc finger; sequence CSICGNFTDSDPCAIC. Residues 81-175 enclose the Toprim domain; the sequence is SIICVIEEPK…KVTRIAHGIP (95 aa).

This sequence belongs to the RecR family.

Its function is as follows. May play a role in DNA repair. It seems to be involved in an RecBC-independent recombinational process of DNA repair. It may act with RecF and RecO. The sequence is that of Recombination protein RecR from Clostridium kluyveri (strain NBRC 12016).